The primary structure comprises 403 residues: Sorting nexin-32 (403 aa).

The region spanning 20–168 (LQGDSSLQVE…VFLEYGQDLS (149 aa)) is the PX domain. Residues 258 to 335 (NQLRTSFLKL…KARTRNREVR (78 aa)) are a coiled coil.

The protein belongs to the sorting nexin family.

Functionally, may be involved in several stages of intracellular trafficking. The sequence is that of Sorting nexin-32 (SNX32) from Homo sapiens (Human).